The chain runs to 467 residues: Prenyltransferase GME11375 (467 aa).

Glu93 provides a ligand contact to L-tryptophan. Arg108, Lys196, Tyr198, Lys266, Tyr268, and Tyr436 together coordinate dimethylallyl diphosphate.

This sequence belongs to the tryptophan dimethylallyltransferase family.

It participates in secondary metabolite biosynthesis. Its function is as follows. Prenyltransferase; part of the gene cluster that mediates the biosynthesis of dibenzodioxocinones such as pestalotiollide B, a novel class of inhibitors against cholesterol ester transfer protein (CEPT). The biosynthesis initiates from condensation of acetate and malonate units catalyzed by the non-reducing PKS pks8/GME11356. Pks8/GME11356 lacks a thioesterase (TE) domain, which is important to the cyclizing of the third ring of atrochrysone carboxylic acid, and the esterase GME11355 might play the role of TE and catalyzes the cyclization reaction of the C ring. The lactamase-like protein GME11357 (or other beta-lactamases in Pestalotiopsis microspora) probably hydrolyzes the thioester bond between the ACP of pks8/GME11356 and the intermediate to release atrochrysone carboxylic acid, which is spontaneously dehydrates to form endocrocin anthrone. Endocrocin anthrone is further converted to emodin via the endocrocin intermediate. Emodin is then oxidized by several enzymes such as the Baeyer-Villiger oxidase GME11358, the oxidoreductase GME11367, the short chain dehydrogenase/reductase GME11373, as well as by other oxidoreductases from the cluster, to modify the A and C rings and open the B ring, and finally yield monodictyphenone. The prenyltransferase GME11375 may catalyze the addition reaction between the C5 side chains and the carbon bone of dibenzodioxocinones. The remaining biochemical reactions to the final product dibenzodioxocinones should be methylation catalyzed by methyltransferase GME11366 and reduction and lactonization reaction catalyzed by a series of oxidordeuctases. The polypeptide is Prenyltransferase GME11375 (Pestalotiopsis microspora).